Consider the following 317-residue polypeptide: L-lactate dehydrogenase (317 aa).

NAD(+) contacts are provided by residues 16 to 17, Asp-38, Lys-43, Tyr-69, and 83 to 84; these read FV and GA. 2 residues coordinate substrate: Gln-86 and Arg-92. NAD(+) is bound by residues Ser-105, 122–124, and Ser-147; that span reads ATN. Residue 124 to 127 participates in substrate binding; the sequence is NPVD. Residue 152–155 participates in substrate binding; the sequence is DTAR. Beta-D-fructose 1,6-bisphosphate contacts are provided by residues Arg-157 and 169–172; that span reads QNVH. The Proton acceptor role is filled by His-179. Tyr-224 is subject to Phosphotyrosine. Residue Thr-233 coordinates substrate.

The protein belongs to the LDH/MDH superfamily. LDH family. In terms of assembly, exists as a dimer and a tetramer (dimer of dimers). The conversion occurs via the binding of fructose 1,6-bisphosphate (FBP) to the dimer.

The protein localises to the cytoplasm. It catalyses the reaction (S)-lactate + NAD(+) = pyruvate + NADH + H(+). It participates in fermentation; pyruvate fermentation to lactate; (S)-lactate from pyruvate: step 1/1. Its activity is regulated as follows. Allosterically activated by fructose 1,6-bisphosphate (FBP). The improvement in affinity for substrate occurs in two steps; the binding of fructose 1,6-bisphosphate (FBP) to the dimer, and the dimer to tetramer conversion. Functionally, catalyzes the conversion of lactate to pyruvate. The polypeptide is L-lactate dehydrogenase (Geobacillus stearothermophilus (Bacillus stearothermophilus)).